A 269-amino-acid polypeptide reads, in one-letter code: Ubiquinone/menaquinone biosynthesis C-methyltransferase UbiE (269 aa).

S-adenosyl-L-methionine is bound by residues Thr92, Asp113, and 141–142 (NA).

This sequence belongs to the class I-like SAM-binding methyltransferase superfamily. MenG/UbiE family.

The catalysed reaction is a 2-demethylmenaquinol + S-adenosyl-L-methionine = a menaquinol + S-adenosyl-L-homocysteine + H(+). The enzyme catalyses a 2-methoxy-6-(all-trans-polyprenyl)benzene-1,4-diol + S-adenosyl-L-methionine = a 5-methoxy-2-methyl-3-(all-trans-polyprenyl)benzene-1,4-diol + S-adenosyl-L-homocysteine + H(+). It functions in the pathway quinol/quinone metabolism; menaquinone biosynthesis; menaquinol from 1,4-dihydroxy-2-naphthoate: step 2/2. Its pathway is cofactor biosynthesis; ubiquinone biosynthesis. Its function is as follows. Methyltransferase required for the conversion of demethylmenaquinol (DMKH2) to menaquinol (MKH2) and the conversion of 2-polyprenyl-6-methoxy-1,4-benzoquinol (DDMQH2) to 2-polyprenyl-3-methyl-6-methoxy-1,4-benzoquinol (DMQH2). This is Ubiquinone/menaquinone biosynthesis C-methyltransferase UbiE from Brucella melitensis biotype 2 (strain ATCC 23457).